Consider the following 844-residue polypeptide: DNA mismatch repair protein MutS (844 aa).

602–609 provides a ligand contact to ATP; that stretch reads GPNMSGKS.

This sequence belongs to the DNA mismatch repair MutS family.

This protein is involved in the repair of mismatches in DNA. It is possible that it carries out the mismatch recognition step. This protein has a weak ATPase activity. In Streptococcus pneumoniae (strain Hungary19A-6), this protein is DNA mismatch repair protein MutS.